Consider the following 398-residue polypeptide: Phosphoglycerate kinase (398 aa).

Substrate is bound by residues 21 to 23 (DIN), R37, 60 to 63 (HQGR), R117, and R157. ATP-binding positions include E332 and 357–360 (GGDT).

Belongs to the phosphoglycerate kinase family. In terms of assembly, monomer.

It is found in the cytoplasm. It carries out the reaction (2R)-3-phosphoglycerate + ATP = (2R)-3-phospho-glyceroyl phosphate + ADP. It participates in carbohydrate degradation; glycolysis; pyruvate from D-glyceraldehyde 3-phosphate: step 2/5. The chain is Phosphoglycerate kinase from Halobacterium salinarum (strain ATCC 29341 / DSM 671 / R1).